The chain runs to 160 residues: Probable dihydroneopterin aldolase 3 (160 aa).

Residues Glu-59, Phe-91, and 110–111 contribute to the substrate site; that span reads YE. The active-site Proton donor/acceptor is the Lys-137.

Belongs to the DHNA family. Homooctamer. Forms a hollow cylinder assembled from two ring-shaped tetramers. In terms of tissue distribution, expressed at very low levels in siliques.

The enzyme catalyses 7,8-dihydroneopterin = 6-hydroxymethyl-7,8-dihydropterin + glycolaldehyde. Its pathway is cofactor biosynthesis; tetrahydrofolate biosynthesis; 2-amino-4-hydroxy-6-hydroxymethyl-7,8-dihydropteridine diphosphate from 7,8-dihydroneopterin triphosphate: step 3/4. Functionally, catalyzes the conversion of 7,8-dihydroneopterin into 6-hydroxymethyl-7,8-dihydropterin, a biosynthetic precursor of the vitamin tetrahydrofolate. Can use L-threo-dihydroneopterin and D-erythro-dihydroneopterin as substrates for the formation of 6-hydroxymethyldihydropterin, but it can also catalyze the epimerization of carbon 2' of dihydroneopterin and dihydromonapterin. The chain is Probable dihydroneopterin aldolase 3 from Arabidopsis thaliana (Mouse-ear cress).